The sequence spans 173 residues: Crossover junction endodeoxyribonuclease RuvC (173 aa).

Active-site residues include Asp-8, Glu-67, and Asp-139. Mg(2+)-binding residues include Asp-8, Glu-67, and Asp-139.

Belongs to the RuvC family. In terms of assembly, homodimer which binds Holliday junction (HJ) DNA. The HJ becomes 2-fold symmetrical on binding to RuvC with unstacked arms; it has a different conformation from HJ DNA in complex with RuvA. In the full resolvosome a probable DNA-RuvA(4)-RuvB(12)-RuvC(2) complex forms which resolves the HJ. Mg(2+) is required as a cofactor.

Its subcellular location is the cytoplasm. The catalysed reaction is Endonucleolytic cleavage at a junction such as a reciprocal single-stranded crossover between two homologous DNA duplexes (Holliday junction).. Functionally, the RuvA-RuvB-RuvC complex processes Holliday junction (HJ) DNA during genetic recombination and DNA repair. Endonuclease that resolves HJ intermediates. Cleaves cruciform DNA by making single-stranded nicks across the HJ at symmetrical positions within the homologous arms, yielding a 5'-phosphate and a 3'-hydroxyl group; requires a central core of homology in the junction. The consensus cleavage sequence is 5'-(A/T)TT(C/G)-3'. Cleavage occurs on the 3'-side of the TT dinucleotide at the point of strand exchange. HJ branch migration catalyzed by RuvA-RuvB allows RuvC to scan DNA until it finds its consensus sequence, where it cleaves and resolves the cruciform DNA. This Vibrio parahaemolyticus serotype O3:K6 (strain RIMD 2210633) protein is Crossover junction endodeoxyribonuclease RuvC.